The following is a 227-amino-acid chain: Cytidylate kinase (227 aa).

7–15 contacts ATP; that stretch reads GPAGSGKST.

It belongs to the cytidylate kinase family. Type 1 subfamily.

It is found in the cytoplasm. It carries out the reaction CMP + ATP = CDP + ADP. The catalysed reaction is dCMP + ATP = dCDP + ADP. The polypeptide is Cytidylate kinase (Salinibacter ruber (strain DSM 13855 / M31)).